Reading from the N-terminus, the 55-residue chain is Large ribosomal subunit protein bL33 (55 aa).

Belongs to the bacterial ribosomal protein bL33 family.

The polypeptide is Large ribosomal subunit protein bL33 (Sinorhizobium fredii (strain NBRC 101917 / NGR234)).